Consider the following 112-residue polypeptide: Protein GAST1 (112 aa).

The N-terminal stretch at 1–25 is a signal peptide; sequence MAGKMSIVLFVLLVVFLTQNQVSRA.

Belongs to the GASA family. In terms of processing, six disulfide bonds may be present. All shoot organs.

It localises to the secreted. This chain is Protein GAST1 (GAST1), found in Solanum lycopersicum (Tomato).